The sequence spans 396 residues: Phosphoglycerate kinase (396 aa).

Substrate-binding positions include aspartate 21–asparagine 23, arginine 36, histidine 59–lysine 62, arginine 119, and arginine 156. Residues lysine 206, glutamate 325, and glycine 352 to serine 355 each bind ATP.

This sequence belongs to the phosphoglycerate kinase family. In terms of assembly, monomer.

The protein resides in the cytoplasm. It catalyses the reaction (2R)-3-phosphoglycerate + ATP = (2R)-3-phospho-glyceroyl phosphate + ADP. Its pathway is carbohydrate degradation; glycolysis; pyruvate from D-glyceraldehyde 3-phosphate: step 2/5. This Staphylococcus epidermidis (strain ATCC 35984 / DSM 28319 / BCRC 17069 / CCUG 31568 / BM 3577 / RP62A) protein is Phosphoglycerate kinase.